A 248-amino-acid polypeptide reads, in one-letter code: Isoprenyl transferase (248 aa).

Asp-28 is a catalytic residue. Residue Asp-28 coordinates Mg(2+). Substrate is bound by residues 29-32 (GNGR), Trp-33, Arg-41, His-45, and 73-75 (SSE). Asn-76 (proton acceptor) is an active-site residue. Substrate-binding positions include Trp-77, Arg-79, Arg-196, and 202–204 (RLS). Glu-215 is a binding site for Mg(2+).

The protein belongs to the UPP synthase family. As to quaternary structure, homodimer. Requires Mg(2+) as cofactor.

Catalyzes the condensation of isopentenyl diphosphate (IPP) with allylic pyrophosphates generating different type of terpenoids. This is Isoprenyl transferase from Zymomonas mobilis subsp. mobilis (strain ATCC 31821 / ZM4 / CP4).